Here is a 195-residue protein sequence, read N- to C-terminus: ATP-dependent Clp protease proteolytic subunit (195 aa).

Residue serine 101 is the Nucleophile of the active site. Histidine 126 is an active-site residue.

The protein belongs to the peptidase S14 family. Component of the chloroplastic Clp protease core complex.

It localises to the plastid. The protein localises to the chloroplast stroma. The catalysed reaction is Hydrolysis of proteins to small peptides in the presence of ATP and magnesium. alpha-casein is the usual test substrate. In the absence of ATP, only oligopeptides shorter than five residues are hydrolyzed (such as succinyl-Leu-Tyr-|-NHMec, and Leu-Tyr-Leu-|-Tyr-Trp, in which cleavage of the -Tyr-|-Leu- and -Tyr-|-Trp bonds also occurs).. In terms of biological role, cleaves peptides in various proteins in a process that requires ATP hydrolysis. Has a chymotrypsin-like activity. Plays a major role in the degradation of misfolded proteins. The sequence is that of ATP-dependent Clp protease proteolytic subunit from Oltmannsiellopsis viridis (Marine flagellate).